The chain runs to 103 residues: UPF0473 protein SGO_2040 (103 aa).

It belongs to the UPF0473 family.

In Streptococcus gordonii (strain Challis / ATCC 35105 / BCRC 15272 / CH1 / DL1 / V288), this protein is UPF0473 protein SGO_2040.